Reading from the N-terminus, the 197-residue chain is Endonuclease V (197 aa).

Mg(2+) contacts are provided by Asp37 and Glu101.

This sequence belongs to the endonuclease V family. Mg(2+) is required as a cofactor.

Its subcellular location is the cytoplasm. The enzyme catalyses Endonucleolytic cleavage at apurinic or apyrimidinic sites to products with a 5'-phosphate.. Its function is as follows. DNA repair enzyme involved in the repair of deaminated bases. Selectively cleaves double-stranded DNA at the second phosphodiester bond 3' to a deoxyinosine leaving behind the intact lesion on the nicked DNA. The protein is Endonuclease V of Thermococcus kodakarensis (strain ATCC BAA-918 / JCM 12380 / KOD1) (Pyrococcus kodakaraensis (strain KOD1)).